Here is a 140-residue protein sequence, read N- to C-terminus: Large ribosomal subunit protein uL16c (140 aa).

Belongs to the universal ribosomal protein uL16 family. In terms of assembly, part of the 50S ribosomal subunit.

Its subcellular location is the plastid. The protein resides in the chloroplast. This is Large ribosomal subunit protein uL16c from Psilotum nudum (Whisk fern).